The sequence spans 298 residues: Aspartate carbamoyltransferase catalytic subunit (298 aa).

Carbamoyl phosphate is bound by residues Arg53 and Thr54. Lys81 contributes to the L-aspartate binding site. 3 residues coordinate carbamoyl phosphate: Arg103, His132, and Gln135. The L-aspartate site is built by Arg166 and Arg218. The carbamoyl phosphate site is built by Gly259 and Pro260.

The protein belongs to the aspartate/ornithine carbamoyltransferase superfamily. ATCase family. In terms of assembly, heterododecamer (2C3:3R2) of six catalytic PyrB chains organized as two trimers (C3), and six regulatory PyrI chains organized as three dimers (R2).

The enzyme catalyses carbamoyl phosphate + L-aspartate = N-carbamoyl-L-aspartate + phosphate + H(+). Its pathway is pyrimidine metabolism; UMP biosynthesis via de novo pathway; (S)-dihydroorotate from bicarbonate: step 2/3. In terms of biological role, catalyzes the condensation of carbamoyl phosphate and aspartate to form carbamoyl aspartate and inorganic phosphate, the committed step in the de novo pyrimidine nucleotide biosynthesis pathway. The protein is Aspartate carbamoyltransferase catalytic subunit of Anaplasma marginale (strain St. Maries).